Here is a 293-residue protein sequence, read N- to C-terminus: D-psicose 3-epimerase (293 aa).

Residues Y6 and A107 each coordinate substrate. The active-site Proton donor/acceptor is E150. E150 contributes to the Mn(2+) binding site. Substrate-binding positions include E156 and 183 to 186 (DTFH). Positions 183 and 209 each coordinate Mn(2+). A substrate-binding site is contributed by R215. The Proton donor/acceptor role is filled by E244. Residue E244 participates in Mn(2+) binding.

It belongs to the hyi family. In terms of assembly, homotetramer. It depends on Mn(2+) as a cofactor. Co(2+) is required as a cofactor.

It catalyses the reaction D-allulose = keto-D-fructose. Functionally, involved in the biosynthesis of D-psicose. Catalyzes the reversible epimerization of D-fructose at the C3 position to yield D-psicose. The enzyme is highly specific for D-psicose and shows very low activity with D-tagatose. This chain is D-psicose 3-epimerase, found in Ruminiclostridium cellulolyticum (strain ATCC 35319 / DSM 5812 / JCM 6584 / H10) (Clostridium cellulolyticum).